Consider the following 166-residue polypeptide: CDP-archaeol synthase (166 aa).

5 helical membrane-spanning segments follow: residues 1 to 21, 55 to 75, 78 to 98, 110 to 130, and 131 to 151; these read MPII…LVAN, LLVA…FLGI, IYVS…GAFI, AIGL…IISK, and ISLN…LHIL.

It belongs to the CDP-archaeol synthase family. Requires Mg(2+) as cofactor.

The protein localises to the cell membrane. The catalysed reaction is 2,3-bis-O-(geranylgeranyl)-sn-glycerol 1-phosphate + CTP + H(+) = CDP-2,3-bis-O-(geranylgeranyl)-sn-glycerol + diphosphate. The protein operates within membrane lipid metabolism; glycerophospholipid metabolism. Catalyzes the formation of CDP-2,3-bis-(O-geranylgeranyl)-sn-glycerol (CDP-archaeol) from 2,3-bis-(O-geranylgeranyl)-sn-glycerol 1-phosphate (DGGGP) and CTP. This reaction is the third ether-bond-formation step in the biosynthesis of archaeal membrane lipids. The chain is CDP-archaeol synthase from Sulfurisphaera tokodaii (strain DSM 16993 / JCM 10545 / NBRC 100140 / 7) (Sulfolobus tokodaii).